The following is a 148-amino-acid chain: Probable glucosamine 6-phosphate N-acetyltransferase (148 aa).

Residues 3–148 enclose the N-acetyltransferase domain; sequence ISINELNFDD…KQMALYLNGK (146 aa). Substrate-binding positions include threonine 25, 72–75, and 84–86; these read KFIH and EDV. Residues 86 to 88 and 94 to 99 each bind acetyl-CoA; these read VVV and LHGIGK. Substrate-binding positions include 115–116 and aspartate 120; that span reads YK. Residue 129–131 participates in acetyl-CoA binding; the sequence is YCK. Position 138 (glutamate 138) interacts with substrate.

It belongs to the acetyltransferase family. GNA1 subfamily.

It catalyses the reaction D-glucosamine 6-phosphate + acetyl-CoA = N-acetyl-D-glucosamine 6-phosphate + CoA + H(+). Its pathway is nucleotide-sugar biosynthesis; UDP-N-acetyl-alpha-D-glucosamine biosynthesis; N-acetyl-alpha-D-glucosamine 1-phosphate from alpha-D-glucosamine 6-phosphate (route I): step 1/2. This Acanthamoeba polyphaga (Amoeba) protein is Probable glucosamine 6-phosphate N-acetyltransferase.